The sequence spans 322 residues: Heat-inducible transcription repressor HrcA (322 aa).

This sequence belongs to the HrcA family.

Negative regulator of class I heat shock genes (grpE-dnaK-dnaJ and groELS operons). Prevents heat-shock induction of these operons. The protein is Heat-inducible transcription repressor HrcA of Staphylococcus carnosus (strain TM300).